An 815-amino-acid polypeptide reads, in one-letter code: DNA gyrase subunit B (815 aa).

Residues Met1–Asp21 are disordered. A Toprim domain is found at Ser430–Ser545. Glu436, Asp509, and Asp511 together coordinate Mg(2+).

The protein belongs to the type II topoisomerase GyrB family. In terms of assembly, heterotetramer, composed of two GyrA and two GyrB chains. In the heterotetramer, GyrA contains the active site tyrosine that forms a transient covalent intermediate with DNA, while GyrB binds cofactors and catalyzes ATP hydrolysis. Mg(2+) serves as cofactor. Requires Mn(2+) as cofactor. The cofactor is Ca(2+).

The protein localises to the cytoplasm. The catalysed reaction is ATP-dependent breakage, passage and rejoining of double-stranded DNA.. Its function is as follows. A type II topoisomerase that negatively supercoils closed circular double-stranded (ds) DNA in an ATP-dependent manner to modulate DNA topology and maintain chromosomes in an underwound state. Negative supercoiling favors strand separation, and DNA replication, transcription, recombination and repair, all of which involve strand separation. Also able to catalyze the interconversion of other topological isomers of dsDNA rings, including catenanes and knotted rings. Type II topoisomerases break and join 2 DNA strands simultaneously in an ATP-dependent manner. The chain is DNA gyrase subunit B from Myxococcus xanthus.